We begin with the raw amino-acid sequence, 134 residues long: Thionin-2.2 (134 aa).

The signal sequence occupies residues Met-1 to Ala-24. Disulfide bonds link Cys-27-Cys-64, Cys-28-Cys-56, and Cys-40-Cys-50. Residues Asp-71 to Ala-134 constitute a propeptide, acidic domain.

This sequence belongs to the plant thionin (TC 1.C.44) family. As to expression, low basal expression in seedlings. Also detected in rosette leaves.

The protein resides in the secreted. Its function is as follows. Thionins are small plant proteins which are toxic to animal cells. They seem to exert their toxic effect at the level of the cell membrane. Their precise function is not known. The protein is Thionin-2.2 (THI2.2) of Arabidopsis thaliana (Mouse-ear cress).